Consider the following 139-residue polypeptide: Nucleoside diphosphate kinase (139 aa).

Positions 11, 59, 87, 93, 104, and 114 each coordinate ATP. Histidine 117 acts as the Pros-phosphohistidine intermediate in catalysis.

The protein belongs to the NDK family. As to quaternary structure, homotetramer. Mg(2+) serves as cofactor.

Its subcellular location is the cytoplasm. It catalyses the reaction a 2'-deoxyribonucleoside 5'-diphosphate + ATP = a 2'-deoxyribonucleoside 5'-triphosphate + ADP. The enzyme catalyses a ribonucleoside 5'-diphosphate + ATP = a ribonucleoside 5'-triphosphate + ADP. In terms of biological role, major role in the synthesis of nucleoside triphosphates other than ATP. The ATP gamma phosphate is transferred to the NDP beta phosphate via a ping-pong mechanism, using a phosphorylated active-site intermediate. This is Nucleoside diphosphate kinase from Moorella thermoacetica (strain ATCC 39073 / JCM 9320).